Here is a 331-residue protein sequence, read N- to C-terminus: MSDQSSEPLDSSLRQAVVPDSAAGRRFDAVLAELFPEFSRSRLSEWIKSGDALLDGETARPRDTLRGGETVQVQVVLETQTHAAPQDIPLNVLYEDDHVLVIDKPAGLVVHPGAGNPDGTLVNALLFRDPNLAAVPRAGVVHRLDKDTSGVMVVARTLQAQTALVEQLSARDVHRQYLAVVVGALVSGGTADAPIDRHPRDRLKMAVRDDGRDAVTHYRLRERFRAHTALECRLETGRTHQIRVHMAHLKSPIVGDPLYGGALKLPKGATDTLVAELRGFKRQALHAETLEFLHPVSGEPIRASAPVPEDLQRLMSALREDSARAAELARR.

Positions 25–97 (RRFDAVLAEL…IPLNVLYEDD (73 aa)) constitute an S4 RNA-binding domain. D145 is an active-site residue.

This sequence belongs to the pseudouridine synthase RluA family.

The protein resides in the cytoplasm. The catalysed reaction is uridine(1911/1915/1917) in 23S rRNA = pseudouridine(1911/1915/1917) in 23S rRNA. Functionally, responsible for synthesis of pseudouridine from uracil at positions 1911, 1915 and 1917 in 23S ribosomal RNA. The chain is Ribosomal large subunit pseudouridine synthase D (rluD) from Xanthomonas campestris pv. campestris (strain ATCC 33913 / DSM 3586 / NCPPB 528 / LMG 568 / P 25).